Consider the following 309-residue polypeptide: Dicarboxylate carrier UCP2 (309 aa).

At 1–16 (MVGFKATDVPPTATVK) the chain is on the mitochondrial intermembrane side. Solcar repeat units lie at residues 11–106 (PTAT…VKQF), 114–203 (AGIG…IKDT), and 212–297 (DDLP…LKRA). The important for interaction with long-chain fatty acids stretch occupies residues 16–63 (KFLGAGTAACIADLITFPLDTAKVRLQIQGESQGLARTAASAQYRGVL). The chain crosses the membrane as a helical span at residues 17-40 (FLGAGTAACIADLITFPLDTAKVR). The Mitochondrial matrix portion of the chain corresponds to 41–77 (LQIQGESQGLARTAASAQYRGVLGTILTMVRTEGPRS). A helical transmembrane segment spans residues 78-103 (LYNGLVAGLQRQMSFASVRIGLYDSV). The Mitochondrial intermembrane segment spans residues 104–119 (KQFYTKGSEHAGIGSR). Residues 120-145 (LLAGSTTGALAVAVAQPTDVVKVRFQ) traverse the membrane as a helical segment. Topologically, residues 146 to 173 (AQARAGGGRRYQSTVEAYKTIAREEGIR) are mitochondrial matrix. A helical transmembrane segment spans residues 174-199 (GLWKGTSPNVARNAIVNCTELVTYDL). Residues 200-217 (IKDTLLKANLMTDDLPCH) lie on the Mitochondrial intermembrane side of the membrane. The helical transmembrane segment at 218-242 (FTSAFGAGFCTTVIASPVDVVKTRY) threads the bilayer. The Mitochondrial matrix portion of the chain corresponds to 243–268 (MNSALGQYHSAGHCALTMLRKEGPRA). Residues 269–294 (FYKGFMPSFLRLGSWNVVMFVTYEQL) form a helical membrane-spanning segment. The important for interaction with long-chain fatty acids stretch occupies residues 278 to 285 (LRLGSWNV). Residues 295-309 (KRALMAAYESREAPF) are Mitochondrial intermembrane-facing.

It belongs to the mitochondrial carrier (TC 2.A.29) family. As to quaternary structure, homotetramer. Adopts an asymmetrical dimer of dimers functional form. Interacts with MICU1 (when methylated); leading to decrease the calcium sensitivity of MICU1. Expressed in a variety of organs, with predominant expression in the heart, lung and spleen.

The protein localises to the mitochondrion inner membrane. The enzyme catalyses L-aspartate(out) + phosphate(in) + H(+)(in) = L-aspartate(in) + phosphate(out) + H(+)(out). It carries out the reaction oxaloacetate(out) + phosphate(in) + H(+)(in) = oxaloacetate(in) + phosphate(out) + H(+)(out). It catalyses the reaction (S)-malate(out) + phosphate(in) + H(+)(in) = (S)-malate(in) + phosphate(out) + H(+)(out). The catalysed reaction is malonate(out) + phosphate(in) + H(+)(in) = malonate(in) + phosphate(out) + H(+)(out). The enzyme catalyses sulfate(out) + phosphate(in) + H(+)(in) = sulfate(in) + phosphate(out) + H(+)(out). It carries out the reaction (S)-malate(out) = (S)-malate(in). It catalyses the reaction L-aspartate(out) = L-aspartate(in). The catalysed reaction is phosphate(in) = phosphate(out). The enzyme catalyses chloride(in) = chloride(out). It carries out the reaction H(+)(in) = H(+)(out). It catalyses the reaction a long-chain fatty acid(out) = a long-chain fatty acid(in). Antiporter that exports dicarboxylate intermediates of the Krebs cycle in exchange for phosphate plus a proton across the inner membrane of mitochondria, a process driven by mitochondrial motive force with an overall impact on glycolysis, glutaminolysis and glutathione-dependent redox balance. Continuous export of oxaloacetate and related four-carbon dicarboxylates from mitochondrial matrix into the cytosol negatively regulates the oxidation of acetyl-CoA substrates via the Krebs cycle lowering the ATP/ADP ratio and reactive oxygen species (ROS) production. May mediate inducible proton entry into the mitochondrial matrix affecting ATP turnover as a protection mechanism against oxidative stress. The proton currents are most likely associated with fatty acid flipping across the inner membrane of mitochondria in a metabolic process regulated by free fatty acids and purine nucleotides. Regulates the use of glucose as a source of energy. Required for glucose-induced DRP1-dependent mitochondrial fission and neuron activation in the ventromedial nucleus of the hypothalamus (VMH). This mitochondrial adaptation mechanism modulates the VMH pool of glucose-excited neurons with an impact on systemic glucose homeostasis. Regulates ROS levels and metabolic reprogramming of macrophages during the resolution phase of inflammation. Attenuates ROS production in response to IL33 to preserve the integrity of the Krebs cycle required for persistent production of itaconate and subsequent GATA3-dependent differentiation of inflammation-resolving alternatively activated macrophages. Can unidirectionally transport anions including L-malate, L-aspartate, phosphate and chloride ions. Does not mediate adaptive thermogenesis. This is Dicarboxylate carrier UCP2 (Ucp2) from Rattus norvegicus (Rat).